We begin with the raw amino-acid sequence, 134 residues long: Small ribosomal subunit protein uS8c (134 aa).

This sequence belongs to the universal ribosomal protein uS8 family. In terms of assembly, part of the 30S ribosomal subunit.

It is found in the plastid. The protein localises to the chloroplast. Functionally, one of the primary rRNA binding proteins, it binds directly to 16S rRNA central domain where it helps coordinate assembly of the platform of the 30S subunit. The protein is Small ribosomal subunit protein uS8c (rps8) of Ipomoea purpurea (Common morning glory).